Consider the following 1357-residue polypeptide: Ubiquitin carboxyl-terminal hydrolase 19 (1357 aa).

Disordered stretches follow at residues 1-52 (MSAG…PTKD), 162-239 (LSPI…SDSA), and 275-296 (VSPRSDSVSPVMIRNRDPEKDD). The Cytoplasmic segment spans residues 1-1330 (MSAGTSATGP…TTSDEGCLRY (1330 aa)). Basic and acidic residues-rich tracts occupy residues 28-52 (DRANQESKDGDPRRVSMPRKEPTKD) and 171-182 (SEPRRAKQEARN). The region spanning 51–140 (KDELLLDWRQ…VPLLTWPSLL (90 aa)) is the CS 1 domain. Low complexity predominate over residues 194-206 (SGASPGAQAGPSA). A phosphoserine mark is found at serine 221 and serine 283. Residues 321–423 (LAFVKNDSYE…RQSQRWGGLE (103 aa)) form the CS 2 domain. The tract at residues 432–479 (AKVAVPTGPTPLDSTPPGGGPLPLTGQEEARAVEKEKPKARSEDSGLD) is disordered. Low complexity predominate over residues 437-457 (PTGPTPLDSTPPGGGPLPLTG). Residues 459–475 (EEARAVEKEKPKARSED) are compositionally biased toward basic and acidic residues. The region spanning 536 to 1253 (TGLVNLGNTC…YAYVLFYRRR (718 aa)) is the USP domain. Cysteine 545 functions as the Nucleophile in the catalytic mechanism. Residues cysteine 830, cysteine 833, cysteine 847, cysteine 850, cysteine 856, cysteine 860, histidine 868, and cysteine 872 each contribute to the Zn(2+) site. The segment at 830-872 (CAACQRKQQSEDEKLKRCTRCYRVGYCNQFCQKTHWPDHKGLC) adopts an MYND-type zinc-finger fold. Positions 962 to 981 (DTGAHRMWPPADRGPVPSTS) are disordered. Histidine 1204 acts as the Proton acceptor in catalysis. Basic and acidic residues predominate over residues 1259–1271 (RPPRAAHAEHHPD). 2 disordered regions span residues 1259–1278 (RPPRAAHAEHHPDLGPAAEA) and 1292–1320 (AEEEMVPEGPGPLGPWGPQDWVGPPPRGP). A helical membrane pass occupies residues 1331–1351 (FVLGTVAALVALVLNVFYPLV). Over 1352-1357 (SQSRWR) the chain is Lumenal.

As to quaternary structure, interacts with RNF123. Interacts with BIRC2/c-IAP1, BIRC3/c-IAP2 and XIAP/BIRC4. Interacts with HIF1A (via N-terminus). Expressed in testis, heart, kidney and skeletal muscle. Low levels of expression are detectable in all other tissues screened.

It localises to the endoplasmic reticulum membrane. It carries out the reaction Thiol-dependent hydrolysis of ester, thioester, amide, peptide and isopeptide bonds formed by the C-terminal Gly of ubiquitin (a 76-residue protein attached to proteins as an intracellular targeting signal).. Its function is as follows. Deubiquitinating enzyme that regulates the degradation of various proteins by removing ubiquitin moieties, thereby preventing their proteasomal degradation. Stabilizes RNF123, which promotes CDKN1B degradation and contributes to cell proliferation. Decreases the levels of ubiquitinated proteins during skeletal muscle formation and acts to repress myogenesis. Modulates transcription of major myofibrillar proteins. Also involved in turnover of endoplasmic-reticulum-associated degradation (ERAD) substrates. Mechanistically, deubiquitinates and thereby stabilizes several E3 ligases involved in the ERAD pathway including SYVN1 or MARCHF6. Regulates the stability of other E3 ligases including BIRC2/c-IAP1 and BIRC3/c-IAP2 by preventing their ubiquitination. Required for cells to mount an appropriate response to hypoxia by rescuing HIF1A from degradation in a non-catalytic manner and by mediating the deubiquitination of FUNDC1. Attenuates mitochondrial damage and ferroptosis by targeting and stabilizing NADPH oxidase 4/NOX4. Negatively regulates TNF-alpha- and IL-1beta-triggered NF-kappa-B activation by hydrolyzing 'Lys-27'- and 'Lys-63'-linked polyubiquitin chains from MAP3K7. Modulates also the protein level and aggregation of polyQ-expanded huntingtin/HTT through HSP90AA1. The polypeptide is Ubiquitin carboxyl-terminal hydrolase 19 (Usp19) (Rattus norvegicus (Rat)).